The following is a 251-amino-acid chain: MRRPLVAGNWKMHGTRASVAELIEGLRRQELPVEVDVAVFPSSLHVTQVVEGLAGKAVKVGAQDCAAQVEQGALTGELAVSQLVDGGCELVLVGHSERRLILGESDEVVVSKFAAVQKAGLTPVLCVGETREQREANATLGVVGGQLAAVIDALGVQALNNAVVAYEPVWAIGTGLTATPEQAQEVHAAIRAQVAQLDAQVASELRILYGGSVKAASAAELFGMQDIDGGLVGGASLNADEFGAICRAAGN.

9 to 11 (NWK) is a substrate binding site. H95 functions as the Electrophile in the catalytic mechanism. The active-site Proton acceptor is the E167. Substrate contacts are provided by residues G173, S212, and 233–234 (GG).

The protein belongs to the triosephosphate isomerase family. In terms of assembly, homodimer.

It is found in the cytoplasm. It catalyses the reaction D-glyceraldehyde 3-phosphate = dihydroxyacetone phosphate. The protein operates within carbohydrate biosynthesis; gluconeogenesis. It functions in the pathway carbohydrate degradation; glycolysis; D-glyceraldehyde 3-phosphate from glycerone phosphate: step 1/1. Involved in the gluconeogenesis. Catalyzes stereospecifically the conversion of dihydroxyacetone phosphate (DHAP) to D-glyceraldehyde-3-phosphate (G3P). The chain is Triosephosphate isomerase from Ectopseudomonas mendocina (strain ymp) (Pseudomonas mendocina).